A 243-amino-acid chain; its full sequence is Segregation and condensation protein A (243 aa).

The protein belongs to the ScpA family. In terms of assembly, component of a cohesin-like complex composed of ScpA, ScpB and the Smc homodimer, in which ScpA and ScpB bind to the head domain of Smc. The presence of the three proteins is required for the association of the complex with DNA.

The protein resides in the cytoplasm. Its function is as follows. Participates in chromosomal partition during cell division. May act via the formation of a condensin-like complex containing Smc and ScpB that pull DNA away from mid-cell into both cell halves. This chain is Segregation and condensation protein A, found in Halothermothrix orenii (strain H 168 / OCM 544 / DSM 9562).